We begin with the raw amino-acid sequence, 1958 residues long: Echinoderm microtubule-associated protein-like 6 (1958 aa).

WD repeat units follow at residues 59-100 (GHND…TVSI), 104-145 (VHTH…LLAS), 148-187 (GHSD…LTAK), 195-233 (GDLQ…RTIQ), 235-273 (AHSA…TKID), 280-321 (GYKG…LILQ), 323-362 (HCEG…LIAR), 364-403 (NMEE…EVVH), 406-445 (DRKE…KKIG), and 561-601 (GHSA…VSNG). Residues 604–627 (ETTPQEGGADSYSEESDSDFSDVP) form a disordered region. The segment covering 615–627 (YSEESDSDFSDVP) has biased composition (acidic residues). 10 WD repeats span residues 725–766 (GHDD…CLSL), 770–811 (HHQR…KIAT), 814–853 (GHKD…FTSK), 861–900 (GKLE…KTVK), 901–940 (AHDG…KTYA), 996–1035 (HMEG…RMLA), 1038–1077 (KLKK…DMLS), 1080–1120 (HRKE…RVGI), 1191–1230 (SDVT…QHAR), and 1236–1276 (GHSA…TQES). The span at 1322-1337 (KPHQQLKEVSMEERPP) shows a compositional bias: basic and acidic residues. The tract at residues 1322-1352 (KPHQQLKEVSMEERPPVSRAAPQPEKLQKNN) is disordered. 10 WD repeats span residues 1412–1456 (EHTD…TLSM), 1460–1501 (FHTK…KVAS), 1504–1543 (GHLE…LLYK), 1553–1591 (AKMQ…RLVA), 1593–1638 (AHTG…CRAF), 1685–1724 (HMEG…LLNK), 1726–1767 (NLGH…GKKR), 1768–1807 (DRKS…SLNR), 1880–1919 (ADKA…KFAK), and 1925–1958 (GHSA…WRCL).

This sequence belongs to the WD repeat EMAP family.

The protein resides in the cytoplasm. It localises to the cytoskeleton. Its function is as follows. May modify the assembly dynamics of microtubules, such that microtubules are slightly longer, but more dynamic. The sequence is that of Echinoderm microtubule-associated protein-like 6 (Eml6) from Mus musculus (Mouse).